Here is a 659-residue protein sequence, read N- to C-terminus: 1,4-alpha-glucan branching enzyme GlgB (659 aa).

Basic and acidic residues predominate over residues 1–12; it reads MRNCKELKHEKN. The tract at residues 1–25 is disordered; sequence MRNCKELKHEKNGNVTEKIGKNKGK. Asp337 acts as the Nucleophile in catalysis. Glu390 acts as the Proton donor in catalysis.

This sequence belongs to the glycosyl hydrolase 13 family. GlgB subfamily. In terms of assembly, monomer.

The enzyme catalyses Transfers a segment of a (1-&gt;4)-alpha-D-glucan chain to a primary hydroxy group in a similar glucan chain.. It participates in glycan biosynthesis; glycogen biosynthesis. In terms of biological role, catalyzes the formation of the alpha-1,6-glucosidic linkages in glycogen by scission of a 1,4-alpha-linked oligosaccharide from growing alpha-1,4-glucan chains and the subsequent attachment of the oligosaccharide to the alpha-1,6 position. The polypeptide is 1,4-alpha-glucan branching enzyme GlgB (Clostridium perfringens (strain ATCC 13124 / DSM 756 / JCM 1290 / NCIMB 6125 / NCTC 8237 / Type A)).